Here is an 80-residue protein sequence, read N- to C-terminus: Defensin-like protein CAL1 (80 aa).

The N-terminal stretch at 1 to 31 (MAPSRRMVASAFLLLAILVATEMGTTKVAEA) is a signal peptide. Cystine bridges form between C34–C80, C45–C65, C51–C74, and C55–C76.

It belongs to the DEFL family. Expressed preferentially in root exodermis and xylem parenchyma cells in vasculature of root and flag leaf sheath.

The protein resides in the secreted. It is found in the extracellular space. Functionally, plant defensin-like protein involved in accumulation of cadmium (Cd) in rice leaves. Mediates Cd efflux from cytosol into extracellular spaces via chelation. This drives Cd secretion from xylem parenchyma cells into the xylem vessels, hence lowering Cd levels in cytosol meanwhile promoting Cd translocation from roots to shoots. This Oryza sativa subsp. japonica (Rice) protein is Defensin-like protein CAL1.